Here is a 559-residue protein sequence, read N- to C-terminus: (R)-mandelonitrile lyase 1 (559 aa).

Residues methionine 1–serine 27 form the signal peptide. Residues asparagine 30 and asparagine 44 are each glycosylated (N-linked (GlcNAc...) asparagine). Residues threonine 63–serine 64, glutamate 82–arginine 83, threonine 133, and asparagine 137–valine 140 each bind FAD. N-linked (GlcNAc...) asparagine glycosylation is found at asparagine 145, asparagine 162, asparagine 178, and asparagine 218. Position 244 (valine 244) interacts with FAD. Asparagine 252, asparagine 255, asparagine 309, asparagine 380, asparagine 402, asparagine 420, and asparagine 467 each carry an N-linked (GlcNAc...) asparagine glycan. Cysteine 427 and cysteine 478 are disulfide-bonded. Residue tyrosine 485 coordinates substrate. Tryptophan 486 to histidine 487 contributes to the FAD binding site. Histidine 487 (proton donor) is an active-site residue. Catalysis depends on histidine 525, which acts as the Proton acceptor. Proline 526–glutamine 527 is a binding site for FAD.

Belongs to the GMC oxidoreductase family. Monomer. Requires FAD as cofactor.

It carries out the reaction (R)-mandelonitrile = benzaldehyde + hydrogen cyanide. Functionally, involved in cyanogenesis, the release of HCN from injured tissues. Catalyzes the stereospecific addition of HCN to a variety of aldehydes in vitro. It is a major seed constituent, and could have the additional role of a storage form for reduced nitrogen. This is (R)-mandelonitrile lyase 1 (MDL1) from Prunus dulcis (Almond).